We begin with the raw amino-acid sequence, 491 residues long: Protein nucleotidyltransferase YdiU (491 aa).

ATP-binding residues include Gly-94, Gly-96, Arg-97, Lys-117, Asp-129, Gly-130, Arg-180, and Arg-187. Asp-256 serves as the catalytic Proton acceptor. Positions 257 and 266 each coordinate Mg(2+). Asp-266 contributes to the ATP binding site.

Belongs to the SELO family. The cofactor is Mg(2+). It depends on Mn(2+) as a cofactor.

The catalysed reaction is L-seryl-[protein] + ATP = 3-O-(5'-adenylyl)-L-seryl-[protein] + diphosphate. The enzyme catalyses L-threonyl-[protein] + ATP = 3-O-(5'-adenylyl)-L-threonyl-[protein] + diphosphate. It catalyses the reaction L-tyrosyl-[protein] + ATP = O-(5'-adenylyl)-L-tyrosyl-[protein] + diphosphate. It carries out the reaction L-histidyl-[protein] + UTP = N(tele)-(5'-uridylyl)-L-histidyl-[protein] + diphosphate. The catalysed reaction is L-seryl-[protein] + UTP = O-(5'-uridylyl)-L-seryl-[protein] + diphosphate. The enzyme catalyses L-tyrosyl-[protein] + UTP = O-(5'-uridylyl)-L-tyrosyl-[protein] + diphosphate. Its function is as follows. Nucleotidyltransferase involved in the post-translational modification of proteins. It can catalyze the addition of adenosine monophosphate (AMP) or uridine monophosphate (UMP) to a protein, resulting in modifications known as AMPylation and UMPylation. This Clostridium botulinum (strain ATCC 19397 / Type A) protein is Protein nucleotidyltransferase YdiU.